The chain runs to 330 residues: 5'-AMP-activated protein kinase subunit gamma-1 (330 aa).

A disordered region spans residues 1–24 (MEAVPSSDSYPAVENEHLQETPES). CBS domains are found at residues 43 to 103 (PTSS…KSAL), 125 to 187 (SFKP…PKPE), and 198 to 260 (IGTY…NLDV). Residues R70, 85–90 (MLTITD), V130, 151–152 (HR), and K170 contribute to the ADP site. Residues R70, 85 to 90 (MLTITD), V130, H151, 151 to 152 (HR), K170, T200, A205, 226 to 227 (SA), and 242 to 245 (SKFD) contribute to the AMP site. Residues R70, 85–90 (MLTITD), V130, 151–152 (HR), R152, and K170 contribute to the ATP site. The AMPK pseudosubstrate signature appears at 138–159 (LFDAVSSLIRNKIHRLPVIDPE). Residue 242–245 (SKFD) coordinates ADP. 242–245 (SKFD) provides a ligand contact to ATP. Phosphoserine; by ULK1 is present on S261. T263 carries the post-translational modification Phosphothreonine; by ULK1. ADP is bound at residue R269. An AMP-binding site is contributed by R269. Residue R269 coordinates ATP. S270 bears the Phosphoserine; by ULK1 mark. The CBS 4 domain occupies 272-329 (YFEGVLKCYLHETLETIINRLVEAEVHRLVVVDENDVVKGIVSLSDILQALVLTGGEK). Residues L277 and 298-299 (HR) contribute to the ADP site. AMP-binding positions include L277, H298, 298–299 (HR), and 314–317 (SLSD). ATP is bound by residues L277 and 298 to 299 (HR).

The protein belongs to the 5'-AMP-activated protein kinase gamma subunit family. In terms of assembly, AMPK is a heterotrimer of an alpha catalytic subunit (PRKAA1 or PRKAA2), a beta (PRKAB1 or PRKAB2) and a gamma non-catalytic subunits (PRKAG1, PRKAG2 or PRKAG3). Interacts with FNIP1 and FNIP2. Phosphorylated by ULK1 and ULK2; leading to negatively regulate AMPK activity and suggesting the existence of a regulatory feedback loop between ULK1, ULK2 and AMPK. Post-translationally, glycosylated; O-GlcNAcylated by OGT, promoting the AMP-activated protein kinase (AMPK) activity.

Functionally, AMP/ATP-binding subunit of AMP-activated protein kinase (AMPK), an energy sensor protein kinase that plays a key role in regulating cellular energy metabolism. In response to reduction of intracellular ATP levels, AMPK activates energy-producing pathways and inhibits energy-consuming processes: inhibits protein, carbohydrate and lipid biosynthesis, as well as cell growth and proliferation. AMPK acts via direct phosphorylation of metabolic enzymes, and by longer-term effects via phosphorylation of transcription regulators. Also acts as a regulator of cellular polarity by remodeling the actin cytoskeleton; probably by indirectly activating myosin. Gamma non-catalytic subunit mediates binding to AMP, ADP and ATP, leading to activate or inhibit AMPK: AMP-binding results in allosteric activation of alpha catalytic subunit (PRKAA1 or PRKAA2) both by inducing phosphorylation and preventing dephosphorylation of catalytic subunits. ADP also stimulates phosphorylation, without stimulating already phosphorylated catalytic subunit. ATP promotes dephosphorylation of catalytic subunit, rendering the AMPK enzyme inactive. This Bos taurus (Bovine) protein is 5'-AMP-activated protein kinase subunit gamma-1 (PRKAG1).